A 286-amino-acid chain; its full sequence is ATP synthase gamma chain (286 aa).

The protein belongs to the ATPase gamma chain family. F-type ATPases have 2 components, CF(1) - the catalytic core - and CF(0) - the membrane proton channel. CF(1) has five subunits: alpha(3), beta(3), gamma(1), delta(1), epsilon(1). CF(0) has three main subunits: a, b and c.

It is found in the cell membrane. In terms of biological role, produces ATP from ADP in the presence of a proton gradient across the membrane. The gamma chain is believed to be important in regulating ATPase activity and the flow of protons through the CF(0) complex. This Bacillus cereus (strain G9842) protein is ATP synthase gamma chain.